A 205-amino-acid polypeptide reads, in one-letter code: Golgi to ER traffic protein 1 (205 aa).

Topologically, residues 1–9 (MFELQPSSI) are lumenal. Residues 10–29 (VVLVFCVLAIKVCISLIGKT) form a helical membrane-spanning segment. Over 30–116 (TIQDRIWYLY…QISKLVNLAI (87 aa)) the chain is Cytoplasmic. Positions 53–103 (ALAQKREELVRVNKERRAISAQDEYAKWTKLNRQFDKLNSEVNDLAEATSS) form a coiled coil. A helical transmembrane segment spans residues 117–137 (AATTTAPIWFSRIWYRKVVLF). At 138-161 (YLPPKVFPYYIEWVLALPFIVTGG) the chain is on the lumenal side. Residues 162–178 (VGLTVWMFALNSVLSSL) traverse the membrane as a helical segment. The Cytoplasmic segment spans residues 179-205 (EFLIKFYLEEPVKKPEAPAASEAQTKQ).

Belongs to the WRB/GET1 family. In terms of assembly, component of the Golgi to ER traffic (GET) complex, which is composed of GET1, GET2 and GET3. Within the complex, GET1 and GET2 form a heterotetramer which is stabilized by phosphatidylinositol binding and which binds to the GET3 homodimer.

It localises to the endoplasmic reticulum membrane. The protein resides in the golgi apparatus membrane. Functionally, required for the post-translational delivery of tail-anchored (TA) proteins to the endoplasmic reticulum. Together with GET2, acts as a membrane receptor for soluble GET3, which recognizes and selectively binds the transmembrane domain of TA proteins in the cytosol. The GET complex cooperates with the HDEL receptor ERD2 to mediate the ATP-dependent retrieval of resident ER proteins that contain a C-terminal H-D-E-L retention signal from the Golgi to the ER. This is Golgi to ER traffic protein 1 from Clavispora lusitaniae (strain ATCC 42720) (Yeast).